Consider the following 102-residue polypeptide: RNA-binding protein Hfq (102 aa).

Residues 9–68 (DPFLNALRRERVPVSIYLVNGIKLQGQIESFDQFVILLKNTVSQMVYKHAISTVVPSRPV) enclose the Sm domain. Residues 63-102 (VPSRPVSHHSNNAGGGTSSNYHHGSSPQNTSAQQDSEETE) are disordered. Positions 70–96 (HHSNNAGGGTSSNYHHGSSPQNTSAQQ) are enriched in polar residues.

The protein belongs to the Hfq family. In terms of assembly, homohexamer.

RNA chaperone that binds small regulatory RNA (sRNAs) and mRNAs to facilitate mRNA translational regulation in response to envelope stress, environmental stress and changes in metabolite concentrations. Also binds with high specificity to tRNAs. This Shigella dysenteriae serotype 1 (strain Sd197) protein is RNA-binding protein Hfq.